Reading from the N-terminus, the 197-residue chain is Nucleoid occlusion factor SlmA (197 aa).

One can recognise an HTH tetR-type domain in the interval 7–67 (INRREHILQC…GLIEFIEESL (61 aa)). The segment at residues 30–49 (TTAKLAAEVGVSEAALYRHF) is a DNA-binding region (H-T-H motif). The stretch at 109–136 (DALLGENERLRSRISQLFSKIETHLKQI) forms a coiled coil.

The protein belongs to the nucleoid occlusion factor SlmA family. In terms of assembly, homodimer. Interacts with FtsZ.

The protein resides in the cytoplasm. The protein localises to the nucleoid. Functionally, required for nucleoid occlusion (NO) phenomenon, which prevents Z-ring formation and cell division over the nucleoid. Acts as a DNA-associated cell division inhibitor that binds simultaneously chromosomal DNA and FtsZ, and disrupts the assembly of FtsZ polymers. SlmA-DNA-binding sequences (SBS) are dispersed on non-Ter regions of the chromosome, preventing FtsZ polymerization at these regions. The polypeptide is Nucleoid occlusion factor SlmA (Shewanella pealeana (strain ATCC 700345 / ANG-SQ1)).